A 324-amino-acid chain; its full sequence is Probable pectinesterase A (324 aa).

An N-terminal signal peptide occupies residues 1–19 (MHLPSLVLGLLGLGLTASA). A glycan (N-linked (GlcNAc...) asparagine) is linked at N27. A substrate-binding site is contributed by Q142. The active-site Proton donor is D165. D186 (nucleophile) is an active-site residue. N191 is a glycosylation site (N-linked (GlcNAc...) asparagine). 2 residues coordinate substrate: R246 and W248.

Belongs to the pectinesterase family.

It localises to the secreted. It carries out the reaction [(1-&gt;4)-alpha-D-galacturonosyl methyl ester](n) + n H2O = [(1-&gt;4)-alpha-D-galacturonosyl](n) + n methanol + n H(+). The protein operates within glycan metabolism; pectin degradation; 2-dehydro-3-deoxy-D-gluconate from pectin: step 1/5. In terms of biological role, involved in maceration and soft-rotting of plant tissue. The polypeptide is Probable pectinesterase A (pmeA) (Neosartorya fischeri (strain ATCC 1020 / DSM 3700 / CBS 544.65 / FGSC A1164 / JCM 1740 / NRRL 181 / WB 181) (Aspergillus fischerianus)).